Here is a 209-residue protein sequence, read N- to C-terminus: GTP-binding protein RHO1 (209 aa).

At Ser2 the chain carries N-acetylserine. 17-24 contacts GTP; that stretch reads GDGACGKT. An Effector region motif is present at residues 39–47; that stretch reads YVPTVFENY. GTP is bound by residues 64-68 and 122-125; these read DTAGQ and CKVD. The disordered stretch occupies residues 187-209; it reads KSKTNGKAKKNTTEKKKKKCVLL. Positions 190-209 are enriched in basic residues; the sequence is TNGKAKKNTTEKKKKKCVLL. Cys206 is modified (cysteine methyl ester). The S-geranylgeranyl cysteine moiety is linked to residue Cys206. A propeptide spans 207-209 (removed in mature form); it reads VLL.

The protein belongs to the small GTPase superfamily. Rho family. Interacts with BEM4; the interaction is direct. Interacts with SEC3; the interaction is direct. Interacts with the GAP BAG7. Interacts with the GAP LRG1. Interacts with the GAP SAC7. Interacts with the GAP RDI1. Interacts with the 1,3-beta-glucan synthase component FKS1. Interacts with the protein kinase PKC1. Interacts with the G protein beta subunit STE4. Interacts with SKN7. Interacts with TUS1. Interacts with BNI1.

The protein resides in the cell membrane. Its subcellular location is the endosome membrane. The protein localises to the peroxisome membrane. It carries out the reaction GTP + H2O = GDP + phosphate + H(+). Its activity is regulated as follows. Alternates between an inactive form bound to GDP and an active form bound to GTP. Activated by the guanine nucleotide-exchange factors (GEFs) ROM1, ROM2 and TUS1, and inactivated by GTPase-activating proteins (GAPs) BAG7, BEM2, LRG1, and SAC7, and the Rho GDP-dissociation inhibitor RDI1. The different GAPs regulate RHO1 in a target-specific manner. Functionally, acts as a central regulator in the cell wall integrity signaling pathway, which is regulated by the cell cycle and in response to various types of cell wall stress. Integrates signals from different cell surface sensors, and activates a set of effectors, regulating processes including beta-glucan synthesis at the site of wall remodeling, gene expression related to cell wall biogenesis, organization of the actin cytoskeleton, and protein- and secretory vesicle-targeting to the growth site. Activates the protein kinase C (PKC1) MAP kinase cascade, the beta-1,3-glucan synthase (FKS1), the formin BNI1, the exocyst component SEC3 and the transcription factor SKN7. The sequence is that of GTP-binding protein RHO1 (RHO1) from Saccharomyces cerevisiae (strain ATCC 204508 / S288c) (Baker's yeast).